The primary structure comprises 222 residues: Phosphoglycolate phosphatase (222 aa).

Residue Asp8 is the Nucleophile of the active site. Mg(2+)-binding residues include Asp8 and Asp10. Lys146 serves as a coordination point for substrate. Positions 169 and 173 each coordinate Mg(2+).

It belongs to the archaeal SPP-like hydrolase family. Mg(2+) is required as a cofactor.

It catalyses the reaction 2-phosphoglycolate + H2O = glycolate + phosphate. Functionally, catalyzes the dephosphorylation of 2-phosphoglycolate. The protein is Phosphoglycolate phosphatase of Methanothrix thermoacetophila (strain DSM 6194 / JCM 14653 / NBRC 101360 / PT) (Methanosaeta thermophila).